Consider the following 265-residue polypeptide: Speedy protein E13 (265 aa).

Residues 1–80 (MGQILGKIMM…EPEKELAPEP (80 aa)) form a disordered region. The segment covering 66–80 (DESDDEPEKELAPEP) has biased composition (acidic residues).

Belongs to the Speedy/Ringo family.

In Homo sapiens (Human), this protein is Speedy protein E13.